Here is a 458-residue protein sequence, read N- to C-terminus: ATP synthase subunit beta (458 aa).

148 to 155 (GGAGVGKT) provides a ligand contact to ATP.

It belongs to the ATPase alpha/beta chains family. As to quaternary structure, F-type ATPases have 2 components, CF(1) - the catalytic core - and CF(0) - the membrane proton channel. CF(1) has five subunits: alpha(3), beta(3), gamma(1), delta(1), epsilon(1). CF(0) has three main subunits: a(1), b(2) and c(9-12). The alpha and beta chains form an alternating ring which encloses part of the gamma chain. CF(1) is attached to CF(0) by a central stalk formed by the gamma and epsilon chains, while a peripheral stalk is formed by the delta and b chains.

It is found in the cell inner membrane. It carries out the reaction ATP + H2O + 4 H(+)(in) = ADP + phosphate + 5 H(+)(out). Functionally, produces ATP from ADP in the presence of a proton gradient across the membrane. The catalytic sites are hosted primarily by the beta subunits. This chain is ATP synthase subunit beta, found in Pseudomonas putida (strain W619).